The sequence spans 213 residues: Neuroligin-4, X-linked (213 aa).

The tract at residues phenylalanine 1 to glutamate 56 is disordered. Residues phenylalanine 1–serine 73 are Extracellular-facing. The segment covering histidine 46–proline 55 has biased composition (basic and acidic residues). A helical membrane pass occupies residues valine 74–tyrosine 94. Topologically, residues tyrosine 95–valine 213 are cytoplasmic. Residue serine 109 is modified to Phosphoserine.

This sequence belongs to the type-B carboxylesterase/lipase family. Homodimer. Interacts with NRXN1 in a calcium-dependent manner. Interaction with neurexins is mediated by heparan sulfate glycan modification on neurexin. Interacts through its C-terminus with DLG4/PSD-95 third PDZ domain.

The protein resides in the cell membrane. It localises to the postsynaptic density membrane. Its function is as follows. Cell surface protein involved in cell-cell-interactions via its interactions with neurexin family members. The protein is Neuroligin-4, X-linked (NLGN4X) of Macaca mulatta (Rhesus macaque).